We begin with the raw amino-acid sequence, 121 residues long: Large ribosomal subunit protein uL24 (121 aa).

The interval 1–30 (MVRIVSKQPRKQRKARYNAPNHTRGRFLSA) is disordered.

It belongs to the universal ribosomal protein uL24 family. As to quaternary structure, part of the 50S ribosomal subunit.

Its function is as follows. One of two assembly initiator proteins, it binds directly to the 5'-end of the 23S rRNA, where it nucleates assembly of the 50S subunit. Located at the polypeptide exit tunnel on the outside of the subunit. This Methanoculleus marisnigri (strain ATCC 35101 / DSM 1498 / JR1) protein is Large ribosomal subunit protein uL24.